The primary structure comprises 64 residues: Conotoxin Ts-011 (64 aa).

Positions 1-22 (MHCLPVLVILLLLIASTPSVDA) are cleaved as a signal peptide. Positions 23 to 51 (RPKTKDDVPLASFHGADNANRILRTLWNL) are excised as a propeptide. Isoleucine amide is present on isoleucine 63.

Belongs to the conotoxin T superfamily. Post-translationally, contains 2 disulfide bonds that can be either 'C1-C3, C2-C4' or 'C1-C4, C2-C3', since these disulfide connectivities have been observed for conotoxins with cysteine framework V (for examples, see AC P0DQQ7 and AC P81755). In terms of tissue distribution, expressed by the venom duct.

Its subcellular location is the secreted. In Conus tessulatus (Tessellate cone), this protein is Conotoxin Ts-011.